The chain runs to 407 residues: DNA primase DnaG (407 aa).

One can recognise a Toprim domain in the interval Asp172 to Pro248. 3 residues coordinate Mg(2+): Glu178, Asp222, and Asp224. A disordered region spans residues Ala279–Gln304. Pro residues predominate over residues Ala288 to Ala300.

This sequence belongs to the archaeal DnaG primase family. In terms of assembly, forms a ternary complex with MCM helicase and DNA. Component of the archaeal exosome complex. The cofactor is Mg(2+).

It carries out the reaction ssDNA + n NTP = ssDNA/pppN(pN)n-1 hybrid + (n-1) diphosphate.. Functionally, RNA polymerase that catalyzes the synthesis of short RNA molecules used as primers for DNA polymerase during DNA replication. Also part of the exosome, which is a complex involved in RNA degradation. Acts as a poly(A)-binding protein that enhances the interaction between heteromeric, adenine-rich transcripts and the exosome. The polypeptide is DNA primase DnaG (Pyrobaculum calidifontis (strain DSM 21063 / JCM 11548 / VA1)).